Here is a 194-residue protein sequence, read N- to C-terminus: Peptidyl-tRNA hydrolase (194 aa).

Y16 serves as a coordination point for tRNA. Catalysis depends on H21, which acts as the Proton acceptor. The tRNA site is built by F67, N69, and N115.

Belongs to the PTH family. As to quaternary structure, monomer.

It localises to the cytoplasm. It carries out the reaction an N-acyl-L-alpha-aminoacyl-tRNA + H2O = an N-acyl-L-amino acid + a tRNA + H(+). Its function is as follows. Hydrolyzes ribosome-free peptidyl-tRNAs (with 1 or more amino acids incorporated), which drop off the ribosome during protein synthesis, or as a result of ribosome stalling. Functionally, catalyzes the release of premature peptidyl moieties from peptidyl-tRNA molecules trapped in stalled 50S ribosomal subunits, and thus maintains levels of free tRNAs and 50S ribosomes. The protein is Peptidyl-tRNA hydrolase of Escherichia fergusonii (strain ATCC 35469 / DSM 13698 / CCUG 18766 / IAM 14443 / JCM 21226 / LMG 7866 / NBRC 102419 / NCTC 12128 / CDC 0568-73).